Reading from the N-terminus, the 144-residue chain is Protection of telomeres protein 1c (144 aa).

Belongs to the telombin family. Expressed at extremely low levels at the limit of detection.

It is found in the nucleus. It localises to the chromosome. The protein localises to the telomere. Its function is as follows. Binds specifically single-stranded telomeric DNA with weak affinity. Has probably no function in the regulation of telomere length. The protein is Protection of telomeres protein 1c of Arabidopsis thaliana (Mouse-ear cress).